We begin with the raw amino-acid sequence, 360 residues long: Phosphoserine aminotransferase (360 aa).

Arg41 contacts L-glutamate. Pyridoxal 5'-phosphate contacts are provided by Trp101, Thr152, Asp172, and Gln195. At Lys196 the chain carries N6-(pyridoxal phosphate)lysine. 237–238 is a binding site for pyridoxal 5'-phosphate; that stretch reads NT.

The protein belongs to the class-V pyridoxal-phosphate-dependent aminotransferase family. SerC subfamily. Homodimer. Pyridoxal 5'-phosphate is required as a cofactor.

The protein resides in the cytoplasm. The catalysed reaction is O-phospho-L-serine + 2-oxoglutarate = 3-phosphooxypyruvate + L-glutamate. It catalyses the reaction 4-(phosphooxy)-L-threonine + 2-oxoglutarate = (R)-3-hydroxy-2-oxo-4-phosphooxybutanoate + L-glutamate. It participates in amino-acid biosynthesis; L-serine biosynthesis; L-serine from 3-phospho-D-glycerate: step 2/3. It functions in the pathway cofactor biosynthesis; pyridoxine 5'-phosphate biosynthesis; pyridoxine 5'-phosphate from D-erythrose 4-phosphate: step 3/5. In terms of biological role, catalyzes the reversible conversion of 3-phosphohydroxypyruvate to phosphoserine and of 3-hydroxy-2-oxo-4-phosphonooxybutanoate to phosphohydroxythreonine. The polypeptide is Phosphoserine aminotransferase (Burkholderia cenocepacia (strain HI2424)).